The chain runs to 170 residues: Acireductone dioxygenase (170 aa).

Fe(2+) contacts are provided by H99, H101, E105, and H144. Positions 99, 101, 105, and 144 each coordinate Ni(2+).

It belongs to the acireductone dioxygenase (ARD) family. As to quaternary structure, monomer. It depends on Fe(2+) as a cofactor. Ni(2+) serves as cofactor.

It carries out the reaction 1,2-dihydroxy-5-(methylsulfanyl)pent-1-en-3-one + O2 = 3-(methylsulfanyl)propanoate + CO + formate + 2 H(+). The enzyme catalyses 1,2-dihydroxy-5-(methylsulfanyl)pent-1-en-3-one + O2 = 4-methylsulfanyl-2-oxobutanoate + formate + 2 H(+). The protein operates within amino-acid biosynthesis; L-methionine biosynthesis via salvage pathway; L-methionine from S-methyl-5-thio-alpha-D-ribose 1-phosphate: step 5/6. Functionally, catalyzes 2 different reactions between oxygen and the acireductone 1,2-dihydroxy-3-keto-5-methylthiopentene (DHK-MTPene) depending upon the metal bound in the active site. Fe-containing acireductone dioxygenase (Fe-ARD) produces formate and 2-keto-4-methylthiobutyrate (KMTB), the alpha-ketoacid precursor of methionine in the methionine recycle pathway. Ni-containing acireductone dioxygenase (Ni-ARD) produces methylthiopropionate, carbon monoxide and formate, and does not lie on the methionine recycle pathway. The sequence is that of Acireductone dioxygenase from Bacillus cereus (strain ZK / E33L).